Here is a 285-residue protein sequence, read N- to C-terminus: Tryptophan synthase alpha chain (285 aa).

Active-site proton acceptor residues include glutamate 53 and aspartate 64.

The protein belongs to the TrpA family. As to quaternary structure, tetramer of two alpha and two beta chains.

It carries out the reaction (1S,2R)-1-C-(indol-3-yl)glycerol 3-phosphate + L-serine = D-glyceraldehyde 3-phosphate + L-tryptophan + H2O. Its pathway is amino-acid biosynthesis; L-tryptophan biosynthesis; L-tryptophan from chorismate: step 5/5. The alpha subunit is responsible for the aldol cleavage of indoleglycerol phosphate to indole and glyceraldehyde 3-phosphate. The protein is Tryptophan synthase alpha chain of Bordetella parapertussis (strain 12822 / ATCC BAA-587 / NCTC 13253).